Reading from the N-terminus, the 116-residue chain is UPF0102 protein Sala_0262 (116 aa).

The protein belongs to the UPF0102 family.

This chain is UPF0102 protein Sala_0262, found in Sphingopyxis alaskensis (strain DSM 13593 / LMG 18877 / RB2256) (Sphingomonas alaskensis).